The primary structure comprises 169 residues: Queuosine precursor transporter QueT (169 aa).

A run of 5 helical transmembrane segments spans residues 9–29 (IVTI…PGLS), 44–64 (LNFT…GCMI), 73–93 (VDVI…VLLF), 110–130 (FFFF…ELKF), and 137–157 (LLTW…GAFI).

The protein belongs to the vitamin uptake transporter (VUT/ECF) (TC 2.A.88) family. In terms of assembly, in E.coli forms a stable energy-coupling factor (ECF) transporter complex composed of 2 membrane-embedded substrate-binding protein (S component), 2 ATP-binding proteins (A and A' components) and 2 transmembrane proteins (T component), probably with a stoichiometry of 2:1:1:2. May be able to interact with more than 1 S component at a time.

Its subcellular location is the cell membrane. Functionally, probably a queuosine precursor-binding protein that interacts with the energy-coupling factor (ECF) ABC-transporter complex. Unlike classic ABC transporters this ECF transporter provides the energy necessary to transport a number of different substrates. The substrates themselves are bound by transmembrane, not extracytoplasmic soluble proteins. This Lactococcus lactis subsp. cremoris (strain MG1363) protein is Queuosine precursor transporter QueT (queT).